Here is a 1461-residue protein sequence, read N- to C-terminus: Major viral transcription factor ICP4 homolog (1461 aa).

Disordered regions lie at residues 25–60, 75–518, 811–1002, and 1395–1461; these read AAEEEGIASGPDGGSQGSRRRGSSGEDLLFGPGGLF, AAGA…SREG, RPGP…PRPS, and AGGA…LLLR. Low complexity predominate over residues 75-90; the sequence is AAGATRPPRPPSAQQQ. A compositionally biased stretch (acidic residues) spans 102 to 113; sequence VLDDEDEEEDEP. Composition is skewed to low complexity over residues 167–197 and 224–249; these read RSSPSAASPASSSSGSSGSSGSPGPSAAPRR and PAAVAAAPARRGPASPASPAAGPVSA. A compositionally biased stretch (gly residues) spans 250–260; it reads PGGGGAPSGGG. Positions 270–285 are enriched in basic and acidic residues; sequence REPLLDEPAAARRLDP. Low complexity-rich tracts occupy residues 292–308 and 353–405; these read SPVSSNPNSSSSSTTTV and GFSS…SSSS. Positions 423 to 434 are enriched in pro residues; it reads GPPPSPPAPAAA. A compositionally biased stretch (low complexity) spans 435–453; sequence PRPSASSASATSSSAAASP. Pro residues predominate over residues 814–826; that stretch reads PAEPAPGLPPLWP. Residues 838–888 show a composition bias toward low complexity; sequence PAAAGAPSGLPGSGPSSPASTKSGSSTKSSSGTKSGLSGSSGYASSPAAGP. Residues 894 to 903 show a composition bias toward basic residues; the sequence is RRKKKRRAPG. Over residues 944-965 the composition is skewed to low complexity; the sequence is LGLGPAPDPAPALVSSSSSSSS.

This sequence belongs to the herpesviridae ICP4 family. Post-translationally, a long stretch of serine residues may be a major site of phosphorylation.

It localises to the host nucleus. Its function is as follows. This IE protein is a multifunctional protein capable of migrating to the nucleus, binding to DNA, trans-activating other viral genes, and autoregulating its own synthesis. In Sus scrofa (Pig), this protein is Major viral transcription factor ICP4 homolog (IE).